A 146-amino-acid polypeptide reads, in one-letter code: Vascular endothelial growth factor A (146 aa).

Positions 1 to 26 (MNFLLSWVHWSLALLLYLHHAKWSQA) are cleaved as a signal peptide. 3 cysteine pairs are disulfide-bonded: Cys51–Cys93, Cys82–Cys127, and Cys86–Cys129. N-linked (GlcNAc...) asparagine glycosylation occurs at Asn100.

Belongs to the PDGF/VEGF growth factor family. Homodimer; disulfide-linked. Also found as heterodimer with PGF. Interacts with NRP1. Interacts with isoform 2 of BSG. Interacts with CD82; this interaction inhibits VEGFA-mediated signaling pathway.

In terms of biological role, growth factor active in angiogenesis, vasculogenesis and endothelial cell growth. Induces endothelial cell proliferation, promotes cell migration, inhibits apoptosis and induces permeabilization of blood vessels. Binds to the FLT1/VEGFR1 and KDR/VEGFR2 receptors, heparan sulfate and heparin. Binding to NRP1 receptor initiates a signaling pathway needed for motor neuron axon guidance and cell body migration, including for the caudal migration of facial motor neurons from rhombomere 4 to rhombomere 6 during embryonic development. Also binds the DEAR/FBXW7-AS1 receptor. The chain is Vascular endothelial growth factor A (VEGFA) from Ovis aries (Sheep).